The sequence spans 181 residues: Translation initiation factor IF-3 (181 aa).

Belongs to the IF-3 family. Monomer.

It localises to the cytoplasm. Its function is as follows. IF-3 binds to the 30S ribosomal subunit and shifts the equilibrium between 70S ribosomes and their 50S and 30S subunits in favor of the free subunits, thus enhancing the availability of 30S subunits on which protein synthesis initiation begins. The sequence is that of Translation initiation factor IF-3 from Azotobacter vinelandii.